The following is a 404-amino-acid chain: Probable tRNA sulfurtransferase (404 aa).

One can recognise a THUMP domain in the interval 61–166 (EAVSERLKDV…SGYSYIMCDE (106 aa)). Residues 184 to 185 (LL), 209 to 210 (HF), R266, G288, and Q297 each bind ATP.

The protein belongs to the ThiI family.

It is found in the cytoplasm. The catalysed reaction is [ThiI sulfur-carrier protein]-S-sulfanyl-L-cysteine + a uridine in tRNA + 2 reduced [2Fe-2S]-[ferredoxin] + ATP + H(+) = [ThiI sulfur-carrier protein]-L-cysteine + a 4-thiouridine in tRNA + 2 oxidized [2Fe-2S]-[ferredoxin] + AMP + diphosphate. It carries out the reaction [ThiS sulfur-carrier protein]-C-terminal Gly-Gly-AMP + S-sulfanyl-L-cysteinyl-[cysteine desulfurase] + AH2 = [ThiS sulfur-carrier protein]-C-terminal-Gly-aminoethanethioate + L-cysteinyl-[cysteine desulfurase] + A + AMP + 2 H(+). Its pathway is cofactor biosynthesis; thiamine diphosphate biosynthesis. Catalyzes the ATP-dependent transfer of a sulfur to tRNA to produce 4-thiouridine in position 8 of tRNAs, which functions as a near-UV photosensor. Also catalyzes the transfer of sulfur to the sulfur carrier protein ThiS, forming ThiS-thiocarboxylate. This is a step in the synthesis of thiazole, in the thiamine biosynthesis pathway. The sulfur is donated as persulfide by IscS. This chain is Probable tRNA sulfurtransferase, found in Bacillus cereus (strain ZK / E33L).